The chain runs to 484 residues: Sushi domain-containing protein 4 (484 aa).

Positions 1–35 (MFHHADKGGKKSAFGHPVCGQIILSIILLRPPLLV) are cleaved as a signal peptide. Sushi domains lie at 46–110 (QICK…VCLS), 111–168 (EDCL…QPTC), 169–230 (QGCL…RCLD), and 232–295 (EACS…YCVK). 8 disulfides stabilise this stretch: Cys48–Cys90, Cys76–Cys108, Cys113–Cys156, Cys138–Cys168, Cys171–Cys215, Cys201–Cys228, Cys234–Cys280, and Cys265–Cys293. N-linked (GlcNAc...) asparagine glycans are attached at residues Asn95 and Asn125. The N-linked (GlcNAc...) asparagine glycan is linked to Asn183. The helical transmembrane segment at 311 to 331 (WKVVACTATSVLLALLLVITA) threads the bilayer. Residues 374 to 484 (SGNYCQPPND…PLVEDGEEDC (111 aa)) form a disordered region. 2 stretches are compositionally biased toward polar residues: residues 424–442 (DSLS…SSSH) and 449–467 (SEKT…TSPS). The segment covering 470–484 (IADEIPLVEDGEEDC) has biased composition (acidic residues).

Its subcellular location is the membrane. This Danio rerio (Zebrafish) protein is Sushi domain-containing protein 4 (susd4).